Consider the following 208-residue polypeptide: Ribonuclease HII (208 aa).

An RNase H type-2 domain is found at 12–201 (ELVAGVDEVG…VRALLEPVAV (190 aa)). Positions 18, 19, and 110 each coordinate a divalent metal cation.

This sequence belongs to the RNase HII family. It depends on Mn(2+) as a cofactor. Mg(2+) is required as a cofactor.

It localises to the cytoplasm. It carries out the reaction Endonucleolytic cleavage to 5'-phosphomonoester.. Its function is as follows. Endonuclease that specifically degrades the RNA of RNA-DNA hybrids. In Ectopseudomonas mendocina (strain ymp) (Pseudomonas mendocina), this protein is Ribonuclease HII.